The sequence spans 139 residues: Small ribosomal subunit protein bS6 (139 aa).

The disordered stretch occupies residues leucine 119–lysine 139. Residues glycine 130 to lysine 139 are compositionally biased toward polar residues.

The protein belongs to the bacterial ribosomal protein bS6 family.

Functionally, binds together with bS18 to 16S ribosomal RNA. The polypeptide is Small ribosomal subunit protein bS6 (Borreliella burgdorferi (strain ZS7) (Borrelia burgdorferi)).